The chain runs to 130 residues: uncharacterized protein (130 aa).

This is an uncharacterized protein from Bacillus subtilis (strain 168).